Here is a 444-residue protein sequence, read N- to C-terminus: MPFIVNTDADRESMLHATGVSSFDELIVDIPREVRLNKALELAPAADEMEVRSILESMAAANRSTADYVSFLGGGAYDHFLPSAIKAIVSRSEFYTAYTPYQAEVSQGTLQAIYEYQSLICRLYGMDVTNASMYDGATALAEAVLMAIGVNGRQKVVVAGKLHPWNSSVLKTYLEASDHSAVVQNVVEDGVGSIEVLKGLMDDTVAAVVVQQPNFYGCLEDVEAIGRLAHEHGALFIVSANPVSLGVLEAPGAYGADISVGEGQPLGSSQSFGGPYLGIFSVRQELVRKLPGRLVGMTKDSNGQDGFILTLQTREQHIRREKATSNICSNQALNALQAAVYLSLLGKQGLSEVAGQSLSRAHYLAGRIAAIPGFSIRYNAPFFNEFVVDTPIPPSEVVRKMLEKKVFAGCDLGEFGDEGLLVAVTEKRTKAQLDMFADALGELA.

It belongs to the GcvP family. N-terminal subunit subfamily. The glycine cleavage system is composed of four proteins: P, T, L and H. In this organism, the P 'protein' is a heterodimer of two subunits.

It catalyses the reaction N(6)-[(R)-lipoyl]-L-lysyl-[glycine-cleavage complex H protein] + glycine + H(+) = N(6)-[(R)-S(8)-aminomethyldihydrolipoyl]-L-lysyl-[glycine-cleavage complex H protein] + CO2. Functionally, the glycine cleavage system catalyzes the degradation of glycine. The P protein binds the alpha-amino group of glycine through its pyridoxal phosphate cofactor; CO(2) is released and the remaining methylamine moiety is then transferred to the lipoamide cofactor of the H protein. This Chlorobium luteolum (strain DSM 273 / BCRC 81028 / 2530) (Pelodictyon luteolum) protein is Probable glycine dehydrogenase (decarboxylating) subunit 1.